We begin with the raw amino-acid sequence, 246 residues long: Auxin-responsive protein IAA11 (246 aa).

The short motif at 36 to 40 (LGLTL) is the EAR-like (transcriptional repression) element. The region spanning 136–235 (SMFVKVTMDG…SVRRLRIMKT (100 aa)) is the PB1 domain.

It belongs to the Aux/IAA family. As to quaternary structure, homodimers and heterodimers. Interacts with TPL. In terms of tissue distribution, preferentially expressed in stems and flowers.

Its subcellular location is the nucleus. In terms of biological role, aux/IAA proteins are short-lived transcriptional factors that function as repressors of early auxin response genes at low auxin concentrations. Repression is thought to result from the interaction with auxin response factors (ARFs), proteins that bind to the auxin-responsive promoter element (AuxRE). Formation of heterodimers with ARF proteins may alter their ability to modulate early auxin response genes expression. The chain is Auxin-responsive protein IAA11 (IAA11) from Arabidopsis thaliana (Mouse-ear cress).